A 229-amino-acid polypeptide reads, in one-letter code: Peptidase E (229 aa).

Catalysis depends on charge relay system residues S120, D135, and H157.

This sequence belongs to the peptidase S51 family.

The protein resides in the cytoplasm. It carries out the reaction Dipeptidase E catalyzes the hydrolysis of dipeptides Asp-|-Xaa. It does not act on peptides with N-terminal Glu, Asn or Gln, nor does it cleave isoaspartyl peptides.. In terms of biological role, hydrolyzes dipeptides containing N-terminal aspartate residues. May play a role in allowing the cell to use peptide aspartate to spare carbon otherwise required for the synthesis of the aspartate family of amino acids. In Salmonella typhi, this protein is Peptidase E.